A 72-amino-acid polypeptide reads, in one-letter code: Translation initiation factor IF-1 (72 aa).

One can recognise an S1-like domain in the interval Met1 to Arg72.

This sequence belongs to the IF-1 family. Component of the 30S ribosomal translation pre-initiation complex which assembles on the 30S ribosome in the order IF-2 and IF-3, IF-1 and N-formylmethionyl-tRNA(fMet); mRNA recruitment can occur at any time during PIC assembly.

The protein localises to the cytoplasm. Functionally, one of the essential components for the initiation of protein synthesis. Stabilizes the binding of IF-2 and IF-3 on the 30S subunit to which N-formylmethionyl-tRNA(fMet) subsequently binds. Helps modulate mRNA selection, yielding the 30S pre-initiation complex (PIC). Upon addition of the 50S ribosomal subunit IF-1, IF-2 and IF-3 are released leaving the mature 70S translation initiation complex. In Sodalis glossinidius (strain morsitans), this protein is Translation initiation factor IF-1.